The following is a 354-amino-acid chain: Probable L-ascorbate-6-phosphate lactonase UlaG (354 aa).

This sequence belongs to the UlaG family. A divalent metal cation serves as cofactor.

It localises to the cytoplasm. The enzyme catalyses L-ascorbate 6-phosphate + H2O = 3-dehydro-L-gulonate 6-phosphate. It participates in cofactor degradation; L-ascorbate degradation; D-xylulose 5-phosphate from L-ascorbate: step 1/4. Its function is as follows. Probably catalyzes the hydrolysis of L-ascorbate-6-P into 3-keto-L-gulonate-6-P. Is essential for L-ascorbate utilization under anaerobic conditions. This is Probable L-ascorbate-6-phosphate lactonase UlaG from Shigella boydii serotype 18 (strain CDC 3083-94 / BS512).